The following is a 210-amino-acid chain: Large ribosomal subunit protein uL3 (210 aa).

A disordered region spans residues 126-150; sequence VSATHGSHRNHRKPGSVGASSTPSR.

Belongs to the universal ribosomal protein uL3 family. As to quaternary structure, part of the 50S ribosomal subunit. Forms a cluster with proteins L14 and L19.

One of the primary rRNA binding proteins, it binds directly near the 3'-end of the 23S rRNA, where it nucleates assembly of the 50S subunit. The protein is Large ribosomal subunit protein uL3 of Tropheryma whipplei (strain TW08/27) (Whipple's bacillus).